Consider the following 130-residue polypeptide: Small ribosomal subunit protein uS8 (130 aa).

The protein belongs to the universal ribosomal protein uS8 family. As to quaternary structure, part of the 30S ribosomal subunit. Contacts proteins S5 and S12.

In terms of biological role, one of the primary rRNA binding proteins, it binds directly to 16S rRNA central domain where it helps coordinate assembly of the platform of the 30S subunit. The sequence is that of Small ribosomal subunit protein uS8 from Saccharophagus degradans (strain 2-40 / ATCC 43961 / DSM 17024).